Here is a 71-residue protein sequence, read N- to C-terminus: Small ribosomal subunit protein bS21 (71 aa).

The disordered stretch occupies residues 40-71 (KPTQVRKRKQAAAVKRHMKRLNREQQRRQRPY). Positions 43–59 (QVRKRKQAAAVKRHMKR) are enriched in basic residues. Residues 60 to 71 (LNREQQRRQRPY) are compositionally biased toward basic and acidic residues.

The protein belongs to the bacterial ribosomal protein bS21 family.

The sequence is that of Small ribosomal subunit protein bS21 from Halorhodospira halophila (strain DSM 244 / SL1) (Ectothiorhodospira halophila (strain DSM 244 / SL1)).